Here is a 183-residue protein sequence, read N- to C-terminus: Adenine phosphoribosyltransferase (183 aa).

Belongs to the purine/pyrimidine phosphoribosyltransferase family. In terms of assembly, homodimer.

It is found in the cytoplasm. The enzyme catalyses AMP + diphosphate = 5-phospho-alpha-D-ribose 1-diphosphate + adenine. It functions in the pathway purine metabolism; AMP biosynthesis via salvage pathway; AMP from adenine: step 1/1. In terms of biological role, catalyzes a salvage reaction resulting in the formation of AMP, that is energically less costly than de novo synthesis. This is Adenine phosphoribosyltransferase from Shewanella piezotolerans (strain WP3 / JCM 13877).